Consider the following 1231-residue polypeptide: Complement factor H (1231 aa).

The N-terminal stretch at 1 to 18 (MRLLAKIICLMLWAICVA) is a signal peptide. 20 consecutive Sushi domains span residues 19-82 (EDCN…KCQK), 83-143 (RPCG…ICEV), 144-207 (VKCL…KCVE), 208-264 (ISCK…SCEE), 265-322 (KSCD…RCTL), 324-386 (PCDY…VPCL), 387-444 (RKCY…RCIR), 446-507 (KTCS…TCIK), 515-566 (MNAR…ICYE), 567-625 (RECE…ICKE), 628-686 (QSCG…VCIV), 689-746 (STCG…QCVA), 751-805 (KKCK…NCSM), 809-866 (QLCP…LCVE), 868-928 (IPCS…QCEG), 929-986 (LPCK…SCIK), 987-1045 (TDCL…TCRD), 1046-1104 (TSCV…QCKD), 1107-1165 (GKCG…KCLH), and 1170-1230 (SREI…TCAK). 40 cysteine pairs are disulfide-bonded: Cys-21/Cys-66, Cys-52/Cys-80, Cys-85/Cys-129, Cys-114/Cys-141, Cys-146/Cys-192, Cys-178/Cys-205, Cys-210/Cys-251, Cys-237/Cys-262, Cys-267/Cys-309, Cys-294/Cys-320, Cys-325/Cys-374, Cys-357/Cys-385, Cys-389/Cys-431, Cys-416/Cys-442, Cys-448/Cys-494, Cys-477/Cys-505, Cys-509/Cys-553, Cys-536/Cys-564, Cys-569/Cys-611, Cys-597/Cys-623, Cys-630/Cys-673, Cys-659/Cys-684, Cys-691/Cys-733, Cys-719/Cys-744, Cys-753/Cys-792, Cys-781/Cys-803, Cys-811/Cys-853, Cys-839/Cys-864, Cys-870/Cys-915, Cys-901/Cys-926, Cys-931/Cys-973, Cys-959/Cys-984, Cys-989/Cys-1032, Cys-1018/Cys-1043, Cys-1048/Cys-1091, Cys-1077/Cys-1102, Cys-1109/Cys-1152, Cys-1138/Cys-1163, Cys-1167/Cys-1218, and Cys-1201/Cys-1228. N-linked (GlcNAc...) (complex) asparagine glycosylation occurs at Asn-217. Asn-529 carries N-linked (GlcNAc...) asparagine glycosylation. N-linked (GlcNAc...) asparagine glycosylation is present at Asn-718. N-linked (GlcNAc...) asparagine glycosylation is found at Asn-802 and Asn-822. N-linked (GlcNAc...) (complex) asparagine glycosylation is found at Asn-882 and Asn-911. Asn-1029 carries N-linked (GlcNAc...) (complex) asparagine glycosylation. Asn-1095 carries N-linked (GlcNAc...) asparagine glycosylation.

In terms of assembly, homodimer. Also forms homooligomers. Interacts with complement protein C3b; this interaction inhibits complement activation. Interacts with complement protein C3d. Interacts with CR3/ITGAM; this interaction mediates adhesion of neutrophils to pathogens leading to pathogen clearance. Interacts with complement factor I. As to quaternary structure, (Microbial infection) Interacts with West nile virus non-structural protein 1 (NS1); this interaction leads to the degradation of C3. (Microbial infection) Interacts with C.albicans GPD2; the interaction is direct and leads to the degradation of C3 which enables the pathogen to evade the host innate immune system. In terms of assembly, (Microbial infection) Interacts with Neisseria meningitidis protein fHbp. As to quaternary structure, (Microbial infection) Interacts with Borrelia burgdorferi outer surface protein E/OspE; this interaction recruits complement regulator factor H onto the bacterial surface to evade complement-mediated cell lysis. (Microbial infection) Interacts with Streptococcus pneumoniae protein virulence factor choline-binding protein A/CbpAN; this interaction enables Streptococcus pneumoniae to evade surveillance by human complement system. In terms of assembly, (Microbial infection) Interacts with Staphylococcus aureus surface protein serine-aspartate repeat protein E/SdrE; this interaction sequesters CFH on the surface of S.aureus for complement evasion. As to quaternary structure, (Microbial infection) Interacts with Staphylococcus aureus protein Sbi; this interaction inhibits the complement activation of the alternative pathway. (Microbial infection) Interacts (via sushi 4-6 domains) with P.falciparum surface protein PF92; the interaction recruits CFH onto the merozoite surface preventing complement-mediated cell lysis. The interaction does not affect CFH activity. Interacts (via sushi 6-7 domains) with P.falciparum (strain NF54) GAP50; the interaction occurs in the vector mosquito midgut at the surface of the activated parasite gametocytes; the interaction protects the parasite from alternative complement pathway-mediated elimination. In terms of assembly, (Microbial infection) Interacts (via sushi 4-6 domains) with P.falciparum surface protein PF92; the interaction recruits FHL-1 isoform onto the merozoite surface preventing complement-mediated cell lysis. The interaction does not affect FHL-1 isoform activity. Interacts (via sushi 6-7 domains) with P.falciparum (strain NF54) GAP50; the interaction occurs in the vector mosquito midgut at the surface of the activated parasite gametocytes; the interaction protects the parasite from alternative complement pathway-mediated elimination. Sulfated on tyrosine residues. Post-translationally, according to a report, Asn-217 is not glycosylated. Another study observed glycosylation at this position. As to expression, expressed in the retinal pigment epithelium (at protein level). CFH is one of the most abundant complement components in blood where the liver is the major source of CFH protein in vivo. in addition, CFH is secreted by additional cell types including monocytes, fibroblasts, or endothelial cells.

The protein localises to the secreted. In terms of biological role, glycoprotein that plays an essential role in maintaining a well-balanced immune response by modulating complement activation. Acts as a soluble inhibitor of complement, where its binding to self markers such as glycan structures prevents complement activation and amplification on cell surfaces. Accelerates the decay of the complement alternative pathway (AP) C3 convertase C3bBb, thus preventing local formation of more C3b, the central player of the complement amplification loop. As a cofactor of the serine protease factor I, CFH also regulates proteolytic degradation of already-deposited C3b. In addition, mediates several cellular responses through interaction with specific receptors. For example, interacts with CR3/ITGAM receptor and thereby mediates the adhesion of human neutrophils to different pathogens. In turn, these pathogens are phagocytosed and destroyed. Functionally, (Microbial infection) In the mosquito midgut, binds to the surface of parasite P.falciparum gametocytes and protects the parasite from alternative complement pathway-mediated elimination. This Homo sapiens (Human) protein is Complement factor H (CFH).